A 780-amino-acid polypeptide reads, in one-letter code: 5-methyltetrahydropteroyltriglutamate--homocysteine methyltransferase (780 aa).

5-methyltetrahydropteroyltri-L-glutamate contacts are provided by residues 15–18 (RELK) and Lys-114. L-homocysteine is bound by residues 457–459 (IGS) and Glu-510. L-methionine-binding positions include 457-459 (IGS) and Glu-510. Residues 541 to 542 (RC) and Trp-587 each bind 5-methyltetrahydropteroyltri-L-glutamate. Asp-625 contributes to the L-homocysteine binding site. Asp-625 serves as a coordination point for L-methionine. Glu-631 contacts 5-methyltetrahydropteroyltri-L-glutamate. His-667, Cys-669, and Glu-691 together coordinate Zn(2+). His-720 functions as the Proton donor in the catalytic mechanism. Cys-752 lines the Zn(2+) pocket.

The protein belongs to the vitamin-B12 independent methionine synthase family. It depends on Zn(2+) as a cofactor.

The enzyme catalyses 5-methyltetrahydropteroyltri-L-glutamate + L-homocysteine = tetrahydropteroyltri-L-glutamate + L-methionine. The protein operates within amino-acid biosynthesis; L-methionine biosynthesis via de novo pathway; L-methionine from L-homocysteine (MetE route): step 1/1. In terms of biological role, catalyzes the transfer of a methyl group from 5-methyltetrahydrofolate to homocysteine resulting in methionine formation. The sequence is that of 5-methyltetrahydropteroyltriglutamate--homocysteine methyltransferase from Nitratidesulfovibrio vulgaris (strain DSM 19637 / Miyazaki F) (Desulfovibrio vulgaris).